A 479-amino-acid chain; its full sequence is Ribosomal RNA small subunit methyltransferase F (479 aa).

S-adenosyl-L-methionine is bound by residues 125–131 (AAAPGSK), Glu149, Asp176, and Asp194. Cys247 acts as the Nucleophile in catalysis.

It belongs to the class I-like SAM-binding methyltransferase superfamily. RsmB/NOP family.

The protein localises to the cytoplasm. It catalyses the reaction cytidine(1407) in 16S rRNA + S-adenosyl-L-methionine = 5-methylcytidine(1407) in 16S rRNA + S-adenosyl-L-homocysteine + H(+). Specifically methylates the cytosine at position 1407 (m5C1407) of 16S rRNA. The protein is Ribosomal RNA small subunit methyltransferase F of Escherichia coli (strain ATCC 8739 / DSM 1576 / NBRC 3972 / NCIMB 8545 / WDCM 00012 / Crooks).